A 336-amino-acid chain; its full sequence is Iron-uptake system permease protein FeuC (336 aa).

Transmembrane regions (helical) follow at residues 7–27 (LFIA…SFSV), 57–77 (VVMA…IQAI), 85–105 (PGIL…MLLF), 120–140 (MPLF…IFAW), 150–170 (IILV…FLSL), 191–211 (ANWT…PILI), 246–266 (VAII…GLIA), 280–300 (YILP…DFAG), and 308–328 (EVPA…YLLF).

It belongs to the binding-protein-dependent transport system permease family. FecCD subfamily. In terms of assembly, the complex is composed of one ATP-binding protein (YusV), two transmembrane proteins (FeuB and FeuC) and a solute-binding protein (FeuA).

The protein resides in the cell membrane. Functionally, involved in the uptake of iron. Probably responsible for the translocation of the substrate across the membrane. Part of the ABC transporter complex FeuABC/YusV involved in import of the catecholate siderophores bacillibactin and enterobactin. The protein is Iron-uptake system permease protein FeuC (feuC) of Bacillus subtilis (strain 168).